The sequence spans 363 residues: G-protein coupled receptor 6 (363 aa).

Over 1 to 75 (MNASAAALNE…SGLLLSAVNP (75 aa)) the chain is Extracellular. Asn-2 and Asn-9 each carry an N-linked (GlcNAc...) asparagine glycan. The interval 28–51 (AGTPDTSEWGPPAASAALGGGGGP) is disordered. N-linked (GlcNAc...) asparagine glycosylation occurs at Asn-52. A helical transmembrane segment spans residues 76 to 95 (WDVLLCVSGTVIAGENALVV). Residues 96–107 (ALIASTPALRTP) are Cytoplasmic-facing. A helical membrane pass occupies residues 108–131 (MFVLVGSLATADLLAGCGLILHFV). Over 132–143 (FQYVVPSETVSL) the chain is Extracellular. Residues 144–165 (LMVGFLVASFAASVSSLLAITV) traverse the membrane as a helical segment. The Cytoplasmic portion of the chain corresponds to 166-186 (DRYLSLYNALTYYSRRTLLGV). The chain crosses the membrane as a helical span at residues 187-206 (HLLLAATWTVSLGLGLLPVL). The Extracellular portion of the chain corresponds to 207-231 (GWNCLADRASCSVVRPLTRSHVALL). A helical transmembrane segment spans residues 232–250 (STSFFVVFGIMLHLYVRIC). Residues 251 to 278 (QVVWRHAHQIALQQHCLAPPHLAATRKG) are Cytoplasmic-facing. The helical transmembrane segment at 279 to 305 (VGTLAVVLGTFGASWLPFAIYCVVGSQ) threads the bilayer. Residues 306 to 310 (EDPAI) lie on the Extracellular side of the membrane. The chain crosses the membrane as a helical span at residues 311 to 332 (YTYATLLPATYNSMINPIIYAF). Residues 333-363 (RNQEIQRALWLLFCGCFQSKVPFRSRSPSEV) are Cytoplasmic-facing. The S-palmitoyl cysteine moiety is linked to residue Cys-346. Ser-357, Ser-359, and Ser-361 each carry phosphoserine.

The protein belongs to the G-protein coupled receptor 1 family. In terms of tissue distribution, expressed in the brain, with a prominent distribution in striatum.

The protein resides in the cell membrane. Orphan receptor with constitutive G(s) signaling activity that activate cyclic AMP. Promotes neurite outgrowth and blocks myelin inhibition in neurons. The protein is G-protein coupled receptor 6 (Gpr6) of Rattus norvegicus (Rat).